The chain runs to 206 residues: MTRLLFVLVLSVCLLPVPVKASAVKSLKTFVNKALTFQANFSQTLLDKNFQVIRKASGSMMFERPGKFRWTYDQPYQQLIVGDGKQVWFYDQDLAQVTVHRLDQALGSTPAALLAGGNTIERDFNLQEIDVQGETEWLEAIPKNQENSFELIRLGFSKTGILREMVLRDSFDQVTWLIFSEIEQNPTLTPDLFQFTPPEGVDVIRD.

A signal peptide spans 1-21 (MTRLLFVLVLSVCLLPVPVKA).

This sequence belongs to the LolA family. Monomer.

The protein localises to the periplasm. Its function is as follows. Participates in the translocation of lipoproteins from the inner membrane to the outer membrane. Only forms a complex with a lipoprotein if the residue after the N-terminal Cys is not an aspartate (The Asp acts as a targeting signal to indicate that the lipoprotein should stay in the inner membrane). The sequence is that of Outer-membrane lipoprotein carrier protein from Nitrosomonas europaea (strain ATCC 19718 / CIP 103999 / KCTC 2705 / NBRC 14298).